Consider the following 873-residue polypeptide: Serine/threonine-protein phosphatase 4 regulatory subunit 4 (873 aa).

3 HEAT repeats span residues 213–251 (ILPL…TKSV), 252–290 (VLPE…RSQT), and 392–427 (NFHM…SKLL). A coiled-coil region spans residues 686 to 720 (QKKFYEKDLLDQEKEREELLLLEMEQLEKEKQQND). A compositionally biased stretch (basic and acidic residues) spans 713-737 (EKEKQQNDGRPMSDKMFEKKRRDTK). The segment at 713–766 (EKEKQQNDGRPMSDKMFEKKRRDTKTPTQSLPKNIPISVPGPSSVTPSTSKEIK) is disordered. Positions 747–762 (IPISVPGPSSVTPSTS) are enriched in low complexity. A Phosphoserine modification is found at S775. T797 carries the post-translational modification Phosphothreonine. Positions 822 to 858 (TRNASSVPSSFSPNTPLPSTSRGTGNSVDPKSSGSKD) are enriched in polar residues. Residues 822 to 873 (TRNASSVPSSFSPNTPLPSTSRGTGNSVDPKSSGSKDTQPRKATLKSRKSNP) form a disordered region. Positions 864-873 (ATLKSRKSNP) are enriched in basic residues.

Serine/threonine-protein phosphatase 4 (PP4) occurs in different assemblies of the catalytic and one or more regulatory subunits. Component of the PP4 complex PPP4C-PPP4R4.

It localises to the cytoplasm. Its function is as follows. Putative regulatory subunit of serine/threonine-protein phosphatase 4. The protein is Serine/threonine-protein phosphatase 4 regulatory subunit 4 (PPP4R4) of Homo sapiens (Human).